A 288-amino-acid polypeptide reads, in one-letter code: Bifunctional protein FolD (288 aa).

NADP(+)-binding positions include 166-168 and isoleucine 232; that span reads GAS.

The protein belongs to the tetrahydrofolate dehydrogenase/cyclohydrolase family. As to quaternary structure, homodimer.

The catalysed reaction is (6R)-5,10-methylene-5,6,7,8-tetrahydrofolate + NADP(+) = (6R)-5,10-methenyltetrahydrofolate + NADPH. The enzyme catalyses (6R)-5,10-methenyltetrahydrofolate + H2O = (6R)-10-formyltetrahydrofolate + H(+). It functions in the pathway one-carbon metabolism; tetrahydrofolate interconversion. In terms of biological role, catalyzes the oxidation of 5,10-methylenetetrahydrofolate to 5,10-methenyltetrahydrofolate and then the hydrolysis of 5,10-methenyltetrahydrofolate to 10-formyltetrahydrofolate. This Escherichia coli (strain UTI89 / UPEC) protein is Bifunctional protein FolD.